The sequence spans 149 residues: D-aminoacyl-tRNA deacylase (149 aa).

Positions 137 to 138 (GP) match the Gly-cisPro motif, important for rejection of L-amino acids motif.

This sequence belongs to the DTD family. In terms of assembly, homodimer.

The protein resides in the cytoplasm. The catalysed reaction is glycyl-tRNA(Ala) + H2O = tRNA(Ala) + glycine + H(+). It catalyses the reaction a D-aminoacyl-tRNA + H2O = a tRNA + a D-alpha-amino acid + H(+). An aminoacyl-tRNA editing enzyme that deacylates mischarged D-aminoacyl-tRNAs. Also deacylates mischarged glycyl-tRNA(Ala), protecting cells against glycine mischarging by AlaRS. Acts via tRNA-based rather than protein-based catalysis; rejects L-amino acids rather than detecting D-amino acids in the active site. By recycling D-aminoacyl-tRNA to D-amino acids and free tRNA molecules, this enzyme counteracts the toxicity associated with the formation of D-aminoacyl-tRNA entities in vivo and helps enforce protein L-homochirality. The polypeptide is D-aminoacyl-tRNA deacylase (Paracoccus denitrificans (strain Pd 1222)).